A 151-amino-acid chain; its full sequence is Small ribosomal subunit protein uS15 (151 aa).

Lys-27 carries the post-translational modification N6-acetyllysine; alternate. N6-succinyllysine; alternate is present on Lys-27. Lys-27 is covalently cross-linked (Glycyl lysine isopeptide (Lys-Gly) (interchain with G-Cter in ubiquitin)). Ser-30 is modified (phosphoserine). The residue at position 34 (Lys-34) is an N6-succinyllysine. Position 38 is a phosphotyrosine (Tyr-38). Lys-43 is covalently cross-linked (Glycyl lysine isopeptide (Lys-Gly) (interchain with G-Cter in SUMO2)).

This sequence belongs to the universal ribosomal protein uS15 family. In terms of assembly, component of the small ribosomal subunit. Part of the small subunit (SSU) processome, composed of more than 70 proteins and the RNA chaperone small nucleolar RNA (snoRNA) U3. Ubiquitinated at Lys-27 by RNF14 and RNF25 in response to ribosome collisions (ribosome stalling).

Its subcellular location is the cytoplasm. The protein resides in the nucleus. The protein localises to the nucleolus. Component of the small ribosomal subunit. The ribosome is a large ribonucleoprotein complex responsible for the synthesis of proteins in the cell. Part of the small subunit (SSU) processome, first precursor of the small eukaryotic ribosomal subunit. During the assembly of the SSU processome in the nucleolus, many ribosome biogenesis factors, an RNA chaperone and ribosomal proteins associate with the nascent pre-rRNA and work in concert to generate RNA folding, modifications, rearrangements and cleavage as well as targeted degradation of pre-ribosomal RNA by the RNA exosome. The chain is Small ribosomal subunit protein uS15 from Homo sapiens (Human).